Reading from the N-terminus, the 673-residue chain is Polyadenylate-binding protein, cytoplasmic and nuclear (673 aa).

Residues 1 to 39 form a disordered region; the sequence is MSAETATSPAPAAETPVAPAPATQTTPAEGAPTPAAAAP. 4 RRM domains span residues 46 to 124, 134 to 211, 227 to 304, and 330 to 407; these read ASLY…WSQR, GNIF…HHVG, TNVY…RAQT, and VNLY…LAQR. Residues 300–322 form a disordered region; the sequence is GRAQTKSEREAELKKSHEEKRLE. The segment covering 304-322 has biased composition (basic and acidic residues); it reads TKSEREAELKKSHEEKRLE. Disordered stretches follow at residues 509–572 and 644–673; these read APGY…AGRL and WGKD…EKKE. Residues 569 to 646 form the PABC domain; it reads AGRLDAQSLA…ALRVLAEWGK (78 aa).

Belongs to the polyadenylate-binding protein type-1 family.

It is found in the cytoplasm. It localises to the nucleus. In terms of biological role, binds the poly(A) tail of mRNA. Appears to be an important mediator of the multiple roles of the poly(A) tail in mRNA biogenesis, stability and translation. In the nucleus, involved in both mRNA cleavage and polyadenylation. Is also required for efficient mRNA export to the cytoplasm. Acts in concert with a poly(A)-specific nuclease (PAN) to affect poly(A) tail shortening, which may occur concomitantly with either nucleocytoplasmic mRNA transport or translational initiation. In the cytoplasm, stimulates translation initiation and regulates mRNA decay through translation termination-coupled poly(A) shortening, probably mediated by PAN. This chain is Polyadenylate-binding protein, cytoplasmic and nuclear (PAB1), found in Cryptococcus neoformans var. neoformans serotype D (strain B-3501A) (Filobasidiella neoformans).